We begin with the raw amino-acid sequence, 424 residues long: MTTMISNLPRVLIEEIFFRVPLKSLRAVRLTCKSWNTLSKSRSFRKLYISKRATREEESMMIAMMNFDLYSMRVVVDDDVDPSKAFKKKRNKKSIAFKRQPIFLDEQVKISQVFHCEGLLLCFLKEDDTRVVVWNPYCGQTRWIQLRYSHRPHKDRFIYALGYKDKESRGSFQLLRFVDYFLGAPKNQYFWYEIYDFNSDSWTTLDVTPHWCIYCCDRGVSLNGNTYWCAKERKAEDDIVDHIISFDFTNERFGPLLPLPSKVMEHEYEIVTLSYVKEEKLAALFQHYEADWNEFDIWITTKIDAEVVSWSMFLRMDTGPRIEVPHICEGFFIDEEKKVAMGFEEDFDRKTFIIIGEAGYVRKLDIKAHVDRKCRPTVCSYVPSLVQIKKPARGKRKRQSSLEKRLFDQNMLRLEAFKKLGGYF.

Residues 2–47 (TTMISNLPRVLIEEIFFRVPLKSLRAVRLTCKSWNTLSKSRSFRKL) form the F-box domain.

The sequence is that of F-box protein At2g38590 from Arabidopsis thaliana (Mouse-ear cress).